Reading from the N-terminus, the 200-residue chain is Proteasome subunit beta 2 (200 aa).

A propeptide spans 1 to 10 (removed in mature form; by autocatalysis); that stretch reads MSDQLELMTG. The Nucleophile role is filled by threonine 11.

It belongs to the peptidase T1B family. As to quaternary structure, the 20S proteasome core is composed of 14 alpha and 14 beta subunits that assemble into four stacked heptameric rings, resulting in a barrel-shaped structure. The two inner rings, each composed of seven catalytic beta subunits, are sandwiched by two outer rings, each composed of seven alpha subunits. The catalytic chamber with the active sites is on the inside of the barrel. Has a gated structure, the ends of the cylinder being occluded by the N-termini of the alpha-subunits. Is capped at one or both ends by the proteasome regulatory ATPase, PAN.

The protein localises to the cytoplasm. The enzyme catalyses Cleavage of peptide bonds with very broad specificity.. Its activity is regulated as follows. The formation of the proteasomal ATPase PAN-20S proteasome complex, via the docking of the C-termini of PAN into the intersubunit pockets in the alpha-rings, triggers opening of the gate for substrate entry. Interconversion between the open-gate and close-gate conformations leads to a dynamic regulation of the 20S proteasome proteolysis activity. Functionally, component of the proteasome core, a large protease complex with broad specificity involved in protein degradation. The protein is Proteasome subunit beta 2 of Caldivirga maquilingensis (strain ATCC 700844 / DSM 13496 / JCM 10307 / IC-167).